The sequence spans 301 residues: GTP cyclohydrolase FolE2 (301 aa).

Belongs to the GTP cyclohydrolase IV family.

It catalyses the reaction GTP + H2O = 7,8-dihydroneopterin 3'-triphosphate + formate + H(+). The protein operates within cofactor biosynthesis; 7,8-dihydroneopterin triphosphate biosynthesis; 7,8-dihydroneopterin triphosphate from GTP: step 1/1. Functionally, converts GTP to 7,8-dihydroneopterin triphosphate. The polypeptide is GTP cyclohydrolase FolE2 (Pseudomonas syringae pv. syringae (strain B728a)).